Reading from the N-terminus, the 388-residue chain is MTTGLGMPQTPAPTLAPRRRTRQLMVRDVGVGSDYPISVQSMCTTKTHDVNSTLQQIAELTAAGCDIVRVACPRQEDADALAEIARHSQIPVIADIHFQPKYIFAAIDAGCAAVRVNPGNIKEFDGRVGEVAKAAAAAGIPIRIGVNAGSLDKRFMAKYGKATPEALVESALWEASLFEEHGFSDIKISVKHNDPVVMVAAYEQLAEQCDYPLHLGVTEAGPAFQGTIKSAVAFGALLSRGIGDTIRVSLSAPPVEEVKVGIQILESLNLRPRSLEIVSCPSCGRAQVDVYTLANEVSAGLDGLDVPLRVAVMGCVVNGPGEAREADLGVASGNGKGQIFVRGEVIKTVPESQIVETLIEEAMRIAAQMNSEGGPEATSSGSPVVTVS.

4 residues coordinate [4Fe-4S] cluster: cysteine 280, cysteine 283, cysteine 315, and glutamate 322. The interval 369–388 (MNSEGGPEATSSGSPVVTVS) is disordered. Residues 377–388 (ATSSGSPVVTVS) show a composition bias toward polar residues.

The protein belongs to the IspG family. It depends on [4Fe-4S] cluster as a cofactor.

It carries out the reaction (2E)-4-hydroxy-3-methylbut-2-enyl diphosphate + oxidized [flavodoxin] + H2O + 2 H(+) = 2-C-methyl-D-erythritol 2,4-cyclic diphosphate + reduced [flavodoxin]. It participates in isoprenoid biosynthesis; isopentenyl diphosphate biosynthesis via DXP pathway; isopentenyl diphosphate from 1-deoxy-D-xylulose 5-phosphate: step 5/6. Functionally, converts 2C-methyl-D-erythritol 2,4-cyclodiphosphate (ME-2,4cPP) into 1-hydroxy-2-methyl-2-(E)-butenyl 4-diphosphate. The chain is 4-hydroxy-3-methylbut-2-en-1-yl diphosphate synthase (flavodoxin) from Mycolicibacterium paratuberculosis (strain ATCC BAA-968 / K-10) (Mycobacterium paratuberculosis).